The following is a 424-amino-acid chain: Serine hydroxymethyltransferase (424 aa).

Residues Leu113 and 117 to 119 (GHL) each bind (6S)-5,6,7,8-tetrahydrofolate. An N6-(pyridoxal phosphate)lysine modification is found at Lys222. Residue 361–363 (SPF) coordinates (6S)-5,6,7,8-tetrahydrofolate.

It belongs to the SHMT family. As to quaternary structure, homodimer. Requires pyridoxal 5'-phosphate as cofactor.

It is found in the cytoplasm. It carries out the reaction (6R)-5,10-methylene-5,6,7,8-tetrahydrofolate + glycine + H2O = (6S)-5,6,7,8-tetrahydrofolate + L-serine. The protein operates within one-carbon metabolism; tetrahydrofolate interconversion. It functions in the pathway amino-acid biosynthesis; glycine biosynthesis; glycine from L-serine: step 1/1. Catalyzes the reversible interconversion of serine and glycine with tetrahydrofolate (THF) serving as the one-carbon carrier. This reaction serves as the major source of one-carbon groups required for the biosynthesis of purines, thymidylate, methionine, and other important biomolecules. Also exhibits THF-independent aldolase activity toward beta-hydroxyamino acids, producing glycine and aldehydes, via a retro-aldol mechanism. The protein is Serine hydroxymethyltransferase of Flavobacterium psychrophilum (strain ATCC 49511 / DSM 21280 / CIP 103535 / JIP02/86).